We begin with the raw amino-acid sequence, 99 residues long: Large ribosomal subunit protein bL28 (99 aa).

The protein belongs to the bacterial ribosomal protein bL28 family.

In Caulobacter vibrioides (strain ATCC 19089 / CIP 103742 / CB 15) (Caulobacter crescentus), this protein is Large ribosomal subunit protein bL28.